The sequence spans 398 residues: 1-deoxy-D-xylulose 5-phosphate reductoisomerase (398 aa).

NADPH contacts are provided by Thr-11, Gly-12, Ser-13, Ile-14, Arg-38, Asn-39, and Asn-125. Lys-126 serves as a coordination point for 1-deoxy-D-xylulose 5-phosphate. NADPH is bound at residue Glu-127. Residue Asp-151 participates in Mn(2+) binding. The 1-deoxy-D-xylulose 5-phosphate site is built by Ser-152, Glu-153, Ser-179, and His-202. A Mn(2+)-binding site is contributed by Glu-153. Gly-208 is a binding site for NADPH. 1-deoxy-D-xylulose 5-phosphate-binding residues include Ser-215, Asn-220, Lys-221, and Glu-224. A Mn(2+)-binding site is contributed by Glu-224.

Belongs to the DXR family. It depends on Mg(2+) as a cofactor. Mn(2+) serves as cofactor.

It catalyses the reaction 2-C-methyl-D-erythritol 4-phosphate + NADP(+) = 1-deoxy-D-xylulose 5-phosphate + NADPH + H(+). It functions in the pathway isoprenoid biosynthesis; isopentenyl diphosphate biosynthesis via DXP pathway; isopentenyl diphosphate from 1-deoxy-D-xylulose 5-phosphate: step 1/6. In terms of biological role, catalyzes the NADPH-dependent rearrangement and reduction of 1-deoxy-D-xylulose-5-phosphate (DXP) to 2-C-methyl-D-erythritol 4-phosphate (MEP). The protein is 1-deoxy-D-xylulose 5-phosphate reductoisomerase of Burkholderia vietnamiensis (strain G4 / LMG 22486) (Burkholderia cepacia (strain R1808)).